A 274-amino-acid polypeptide reads, in one-letter code: Ribosomal RNA small subunit methyltransferase A (274 aa).

S-adenosyl-L-methionine contacts are provided by N17, L19, G44, E65, D89, and N111.

This sequence belongs to the class I-like SAM-binding methyltransferase superfamily. rRNA adenine N(6)-methyltransferase family. RsmA subfamily.

It is found in the cytoplasm. The catalysed reaction is adenosine(1518)/adenosine(1519) in 16S rRNA + 4 S-adenosyl-L-methionine = N(6)-dimethyladenosine(1518)/N(6)-dimethyladenosine(1519) in 16S rRNA + 4 S-adenosyl-L-homocysteine + 4 H(+). Specifically dimethylates two adjacent adenosines (A1518 and A1519) in the loop of a conserved hairpin near the 3'-end of 16S rRNA in the 30S particle. May play a critical role in biogenesis of 30S subunits. The chain is Ribosomal RNA small subunit methyltransferase A from Buchnera aphidicola subsp. Schizaphis graminum (strain Sg).